The chain runs to 164 residues: UPF0303 protein RHE_CH02903 (164 aa).

Belongs to the UPF0303 family.

This is UPF0303 protein RHE_CH02903 from Rhizobium etli (strain ATCC 51251 / DSM 11541 / JCM 21823 / NBRC 15573 / CFN 42).